Consider the following 218-residue polypeptide: Trichothecene biosynthesis transcription regulator TRI6 (218 aa).

Positions 154–181 (SQSTNDPGDAGKKGFATRKDRARHEAKH) are disordered. Over residues 162–176 (DAGKKGFATRKDRAR) the composition is skewed to basic and acidic residues. The C2H2-type zinc finger occupies 185–215 (IRCQWRDNNGDQCTRTFSRMDNMRDHFRRIH).

The protein localises to the nucleus. In terms of biological role, transcriptional activator of part of the trichothecene biosynthesis cluster that mediates the production of the antimicrobial trichothecene harzianum A (HA) that plays a role in Botrytis cinerea antagonistic activity and plant defense priming. Regulates expression of both trichothecene and mevalonate pathway genes. The protein is Trichothecene biosynthesis transcription regulator TRI6 of Trichoderma arundinaceum.